Here is an 824-residue protein sequence, read N- to C-terminus: Glycogen phosphorylase (824 aa).

Position 667 is an N6-(pyridoxal phosphate)lysine (K667).

Belongs to the glycogen phosphorylase family. Pyridoxal 5'-phosphate is required as a cofactor.

The catalysed reaction is [(1-&gt;4)-alpha-D-glucosyl](n) + phosphate = [(1-&gt;4)-alpha-D-glucosyl](n-1) + alpha-D-glucose 1-phosphate. Functionally, phosphorylase is an important allosteric enzyme in carbohydrate metabolism. Enzymes from different sources differ in their regulatory mechanisms and in their natural substrates. However, all known phosphorylases share catalytic and structural properties. The protein is Glycogen phosphorylase (glgP) of Chlamydia pneumoniae (Chlamydophila pneumoniae).